The following is a 207-amino-acid chain: LexA repressor (207 aa).

Positions 28-47 (VREIARRFRITPRGAQLHLV) form a DNA-binding region, H-T-H motif. Active-site for autocatalytic cleavage activity residues include S119 and K156.

The protein belongs to the peptidase S24 family. Homodimer.

It carries out the reaction Hydrolysis of Ala-|-Gly bond in repressor LexA.. Functionally, represses a number of genes involved in the response to DNA damage (SOS response), including recA and lexA. In the presence of single-stranded DNA, RecA interacts with LexA causing an autocatalytic cleavage which disrupts the DNA-binding part of LexA, leading to derepression of the SOS regulon and eventually DNA repair. This Thermotoga neapolitana (strain ATCC 49049 / DSM 4359 / NBRC 107923 / NS-E) protein is LexA repressor.